The primary structure comprises 759 residues: Phosphoribosylformylglycinamidine synthase subunit PurL (759 aa).

Residue His48 is part of the active site. ATP is bound by residues Tyr51 and Lys91. Glu93 contacts Mg(2+). Substrate contacts are provided by residues Ser94–His97 and Arg116. The active-site Proton acceptor is the His95. Asp117 is a binding site for Mg(2+). Gln240 provides a ligand contact to substrate. Position 268 (Asp268) interacts with Mg(2+). Position 317–319 (Glu317–Gln319) interacts with substrate. Residues Asn501 and Gly538 each contribute to the ATP site. Residue Asn539 participates in Mg(2+) binding. Ser541 provides a ligand contact to substrate.

This sequence belongs to the FGAMS family. Monomer. Part of the FGAM synthase complex composed of 1 PurL, 1 PurQ and 2 PurS subunits.

The protein localises to the cytoplasm. It catalyses the reaction N(2)-formyl-N(1)-(5-phospho-beta-D-ribosyl)glycinamide + L-glutamine + ATP + H2O = 2-formamido-N(1)-(5-O-phospho-beta-D-ribosyl)acetamidine + L-glutamate + ADP + phosphate + H(+). It participates in purine metabolism; IMP biosynthesis via de novo pathway; 5-amino-1-(5-phospho-D-ribosyl)imidazole from N(2)-formyl-N(1)-(5-phospho-D-ribosyl)glycinamide: step 1/2. Its function is as follows. Part of the phosphoribosylformylglycinamidine synthase complex involved in the purines biosynthetic pathway. Catalyzes the ATP-dependent conversion of formylglycinamide ribonucleotide (FGAR) and glutamine to yield formylglycinamidine ribonucleotide (FGAM) and glutamate. The FGAM synthase complex is composed of three subunits. PurQ produces an ammonia molecule by converting glutamine to glutamate. PurL transfers the ammonia molecule to FGAR to form FGAM in an ATP-dependent manner. PurS interacts with PurQ and PurL and is thought to assist in the transfer of the ammonia molecule from PurQ to PurL. The polypeptide is Phosphoribosylformylglycinamidine synthase subunit PurL (Chlorobaculum tepidum (strain ATCC 49652 / DSM 12025 / NBRC 103806 / TLS) (Chlorobium tepidum)).